Reading from the N-terminus, the 301-residue chain is Lipoyl synthase (301 aa).

[4Fe-4S] cluster contacts are provided by cysteine 37, cysteine 42, cysteine 48, cysteine 63, cysteine 67, cysteine 70, and serine 276. The region spanning 49–265 (WSKKHATVMI…ERIARTKGFL (217 aa)) is the Radical SAM core domain.

Belongs to the radical SAM superfamily. Lipoyl synthase family. [4Fe-4S] cluster serves as cofactor.

The protein resides in the cytoplasm. It catalyses the reaction [[Fe-S] cluster scaffold protein carrying a second [4Fe-4S](2+) cluster] + N(6)-octanoyl-L-lysyl-[protein] + 2 oxidized [2Fe-2S]-[ferredoxin] + 2 S-adenosyl-L-methionine + 4 H(+) = [[Fe-S] cluster scaffold protein] + N(6)-[(R)-dihydrolipoyl]-L-lysyl-[protein] + 4 Fe(3+) + 2 hydrogen sulfide + 2 5'-deoxyadenosine + 2 L-methionine + 2 reduced [2Fe-2S]-[ferredoxin]. Its pathway is protein modification; protein lipoylation via endogenous pathway; protein N(6)-(lipoyl)lysine from octanoyl-[acyl-carrier-protein]: step 2/2. Functionally, catalyzes the radical-mediated insertion of two sulfur atoms into the C-6 and C-8 positions of the octanoyl moiety bound to the lipoyl domains of lipoate-dependent enzymes, thereby converting the octanoylated domains into lipoylated derivatives. The protein is Lipoyl synthase of Rickettsia felis (strain ATCC VR-1525 / URRWXCal2) (Rickettsia azadi).